Consider the following 274-residue polypeptide: Penicillin-insensitive murein endopeptidase (274 aa).

An N-terminal signal peptide occupies residues Met1–Ala19. 3 cysteine pairs are disulfide-bonded: Cys44-Cys265, Cys187-Cys235, and Cys216-Cys223. Residues His110, His113, Asp120, Asp147, His150, and His211 each coordinate Zn(2+). Residues Pro227–Ile274 form a disordered region.

This sequence belongs to the peptidase M74 family. Dimer. It depends on Zn(2+) as a cofactor.

Its subcellular location is the periplasm. Functionally, murein endopeptidase that cleaves the D-alanyl-meso-2,6-diamino-pimelyl amide bond that connects peptidoglycan strands. Likely plays a role in the removal of murein from the sacculus. The chain is Penicillin-insensitive murein endopeptidase from Escherichia coli (strain SE11).